Consider the following 509-residue polypeptide: Metal transporter Nramp3 (509 aa).

Residues 1–12 show a composition bias toward low complexity; sequence MPQLENNEPLLI. The interval 1–25 is disordered; it reads MPQLENNEPLLINEEEEEETAYDET. Residues 13–23 are compositionally biased toward acidic residues; the sequence is NEEEEEETAYD. 12 consecutive transmembrane segments (helical) span residues 56–76, 84–104, 133–153, 165–185, 193–213, 239–259, 285–305, 327–347, 383–403, 406–426, 444–464, and 472–492; these read LWLF…PGNL, AVAG…GLLV, MVLW…EVIG, ILPL…FLFL, LEAV…WMFG, AVGV…SALV, IALF…AKGF, YGGG…AAGQ, IIPT…LDVL, WLNV…LCLV, IAWL…LEFF, and VYTG…LYLI.

Belongs to the NRAMP (TC 2.A.55) family. In terms of tissue distribution, expressed in vascular tissues.

Its subcellular location is the vacuole membrane. Functionally, vacuolar metal transporter involved in intracellular metal homeostasis. Can transport iron (Fe), manganese (Mn) and cadmium (Cd). Regulates metal accumulation under Fe starvation. Acts redundantly with NRAMP4 to mobilize vacuolar Fe and provide sufficient Fe during seed germination. In association with NRAMP4, required for optimal growth and photosynthesis under Mn deficiency. Exports Mn from vacuoles in leaf mesophyll cells, making Mn available for functional photosystem II in chloroplasts. Involved in basal resistance to the bacterial pathogen E.chrysanthemi. The sequence is that of Metal transporter Nramp3 (NRAMP3) from Arabidopsis thaliana (Mouse-ear cress).